The chain runs to 873 residues: MEIPRLLPARGTPQGAGGGGCPAGGGGVHRAPASLACQAPTRRLLLLRGAQDGGPGPRSAEAQRASRGLGPSLNRLAPRPDHRSSGGGRGGGAGGGGGGSGGGGGGGGGGGGGGGGGGSRGGSDDFFLLLLDPVGGDVETVGTEQAGAPVRREEAGAGPRPERRQSAGPPAGRPEPGPRCLSAVPAASPLPAAGPGPAAAAAAAAAAAFAGTITIHNQDLLLRFENGVLTLTTPPLPAWEPGVAPFPQPQPPPQPGALIAPQAAAAGFPPAAAAAAAAAAAGAQLGDCPELPPDLLLAEPAEPAACPAPPEEEAEAPAAAAAQSPRGPAGPGPGPGVVLYLCPEAQCGQTFAKKHQLKVHLLTHSSSQGQRPFKCPLSGCGWTFTTSYKLKRHLQSHDKLRPFGCPVQGCGKSFTTVYNLKAHMKGHEQENSFKCEVCEESFPTQAKLSTHQRSHFEPERPYQCAFSGCKKTFITVSALFSHNRAHFREQELFACSFPGCSKQYDKACRLKIHLRSHTGERPFLCDFDGCGWNFTSMSKLLRHKRKHEDDRRFTCPVEGCGKSFTRAEHLKGHSITHLGTKPFVCPVEGCCARFSARSSLYIHSKKHLQDVGAWKSRCPVPTCNKLFTSKHSMKTHMTKRHNLSQDLLAQLEAANSLTPSSELTSPGQSDLSGAELVSLFSDVPGHGSAAVLDTALVNSGILTIDVASVNSSLAGSLPADNNSNNHSLGQAAEPRALRGAPSDLPQSLDTSLFFGTSVAGYQHSPLDMDDVSAGNVGLFGSLALKNSSLEPQALTPSNKLTVDTEALTPSSTLCENSVSELLTPAKAEWNVHPESDFFGHEEETQFGFSHPTGSHGSQKDTDLITVTGTPFLV.

Disordered stretches follow at residues 1 to 23 (MEIP…GCPA), 48 to 120 (RGAQ…GGSR), 138 to 184 (VETV…LSAV), 240 to 259 (EPGV…GALI), and 301 to 330 (AEPA…GPAG). 2 stretches are compositionally biased toward gly residues: residues 14 to 23 (QGAGGGGCPA) and 85 to 120 (SGGG…GGSR). At Arg-89 the chain carries Omega-N-methylarginine. The segment covering 150–165 (VRREEAGAGPRPERRQ) has biased composition (basic and acidic residues). Pro residues predominate over residues 240 to 255 (EPGVAPFPQPQPPPQP). The segment covering 316–327 (APAAAAAQSPRG) has biased composition (low complexity). 10 C2H2-type zinc fingers span residues 340–364 (YLCP…LLTH), 373–397 (FKCP…LQSH), 403–427 (FGCP…MKGH), 433–455 (FKCE…QRSH), 462–486 (YQCA…NRAH), 493–517 (FACS…LRSH), 523–547 (FLCD…KRKH), 553–577 (FTCP…SITH), 583–607 (FVCP…SKKH), and 616–641 (SRCP…TKRH). A required for interaction with ZXDC region spans residues 340 to 646 (YLCPEAQCGQ…MTKRHNLSQD (307 aa)). The required for transcriptional activation stretch occupies residues 645-776 (QDLLAQLEAA…DMDDVSAGNV (132 aa)).

Belongs to the ZXD family. As to quaternary structure, self-associates. Interacts with ZXDC and CIITA.

It is found in the nucleus. Its function is as follows. Cooperates with CIITA to promote transcription of MHC class I and MHC class II genes. This is Zinc finger X-linked protein ZXDB (Zxdb) from Mus musculus (Mouse).